A 457-amino-acid polypeptide reads, in one-letter code: Acetylcholine receptor subunit alpha (457 aa).

A signal peptide spans 1–20 (MEPRPLLLLLGLCSAGLVLG). Residues 21–230 (SEHETRLVAK…ITYHFVMQRL (210 aa)) are Extracellular-facing. 2 disulfide bridges follow: Cys-148–Cys-162 and Cys-212–Cys-213. N-linked (GlcNAc...) asparagine glycosylation occurs at Asn-161. A run of 3 helical transmembrane segments spans residues 231-255 (PLYF…VFYL), 263-281 (MTLS…LVIV), and 297-316 (YMLF…VIVI). The Cytoplasmic segment spans residues 317 to 428 (NTHHRSPSTH…WKYVAMVMDH (112 aa)). A helical transmembrane segment spans residues 429 to 447 (ILLAVFMLVCIIGTLAVFA).

This sequence belongs to the ligand-gated ion channel (TC 1.A.9) family. Acetylcholine receptor (TC 1.A.9.1) subfamily. Alpha-1/CHRNA1 sub-subfamily. One of the alpha chains that assemble within the acetylcholine receptor, a pentamer of two alpha chains, a beta, a delta, and a gamma (in immature muscle) or epsilon (in mature muscle) chains. The muscle heteropentamer composed of alpha-1, beta-1, delta, epsilon subunits interacts with the alpha-conotoxin ImII.

It localises to the postsynaptic cell membrane. Its subcellular location is the cell membrane. It carries out the reaction K(+)(in) = K(+)(out). It catalyses the reaction Na(+)(in) = Na(+)(out). Functionally, upon acetylcholine binding, the AChR responds by an extensive change in conformation that affects all subunits and leads to opening of an ion-conducting channel across the plasma membrane. This is Acetylcholine receptor subunit alpha (CHRNA1) from Bos taurus (Bovine).